Reading from the N-terminus, the 549-residue chain is Protein EPD1 (549 aa).

Residues 1-22 (MLLNSLFPSILAAATFVTSAAA) form the signal peptide. N-linked (GlcNAc...) asparagine glycans are attached at residues Asn-40 and Asn-59. Cys-72 and Cys-101 are joined by a disulfide. Asn-147 and Asn-163 each carry an N-linked (GlcNAc...) asparagine glycan. Intrachain disulfides connect Cys-214-Cys-347, Cys-232-Cys-263, Cys-369-Cys-420, Cys-378-Cys-444, and Cys-397-Cys-402. Positions 336–356 (AESASGVSRTSCPTNTDNWEA) are enriched in polar residues. Residues 336 to 361 (AESASGVSRTSCPTNTDNWEASTELP) form a disordered region. An N-linked (GlcNAc...) asparagine glycan is attached at Asn-383. Residues Asn-408 and Asn-438 are each glycosylated (N-linked (GlcNAc...) asparagine). The tract at residues 479 to 519 (SVRTDTSEATTDSGSGSSNSGSASSSKSTSSSTSSGSSGSK) is disordered. Low complexity predominate over residues 487-519 (ATTDSGSGSSNSGSASSSKSTSSSTSSGSSGSK).

The protein belongs to the glycosyl hydrolase 72 family.

Its subcellular location is the cell membrane. The sequence is that of Protein EPD1 (EPD1) from Candida maltosa (Yeast).